The chain runs to 251 residues: PF03932 family protein CutC (251 aa).

Belongs to the CutC family.

The protein resides in the cytoplasm. The sequence is that of PF03932 family protein CutC from Agrobacterium fabrum (strain C58 / ATCC 33970) (Agrobacterium tumefaciens (strain C58)).